The following is a 106-amino-acid chain: Ribosomal protein eL42-like (106 aa).

The segment at 26 to 53 (YKKGKDSLYAQGRRRYDRKQSGYGGQTK) is disordered. K53 bears the N6-methyllysine mark.

The protein belongs to the eukaryotic ribosomal protein eL42 family. In terms of tissue distribution, ubiquitously expressed.

The protein resides in the cytoplasm. The chain is Ribosomal protein eL42-like (RPL36AL) from Homo sapiens (Human).